Here is a 353-residue protein sequence, read N- to C-terminus: Uroporphyrinogen decarboxylase (353 aa).

Residues 28-32, aspartate 78, tyrosine 155, serine 210, and histidine 325 each bind substrate; that span reads RQAGR.

Belongs to the uroporphyrinogen decarboxylase family. As to quaternary structure, homodimer.

It localises to the cytoplasm. It carries out the reaction uroporphyrinogen III + 4 H(+) = coproporphyrinogen III + 4 CO2. It participates in porphyrin-containing compound metabolism; protoporphyrin-IX biosynthesis; coproporphyrinogen-III from 5-aminolevulinate: step 4/4. Its function is as follows. Catalyzes the decarboxylation of four acetate groups of uroporphyrinogen-III to yield coproporphyrinogen-III. The sequence is that of Uroporphyrinogen decarboxylase from Nostoc punctiforme (strain ATCC 29133 / PCC 73102).